The primary structure comprises 341 residues: tRNA N6-adenosine threonylcarbamoyltransferase (341 aa).

Residues histidine 111 and histidine 115 each contribute to the Fe cation site. Substrate contacts are provided by residues 134–138, aspartate 167, glycine 180, and asparagine 276; that span reads LVSGG. Aspartate 304 contacts Fe cation.

It belongs to the KAE1 / TsaD family. Requires Fe(2+) as cofactor.

It is found in the cytoplasm. The catalysed reaction is L-threonylcarbamoyladenylate + adenosine(37) in tRNA = N(6)-L-threonylcarbamoyladenosine(37) in tRNA + AMP + H(+). Required for the formation of a threonylcarbamoyl group on adenosine at position 37 (t(6)A37) in tRNAs that read codons beginning with adenine. Is involved in the transfer of the threonylcarbamoyl moiety of threonylcarbamoyl-AMP (TC-AMP) to the N6 group of A37, together with TsaE and TsaB. TsaD likely plays a direct catalytic role in this reaction. The sequence is that of tRNA N6-adenosine threonylcarbamoyltransferase from Pseudomonas aeruginosa (strain ATCC 15692 / DSM 22644 / CIP 104116 / JCM 14847 / LMG 12228 / 1C / PRS 101 / PAO1).